Consider the following 128-residue polypeptide: Phosphoribosyl-AMP cyclohydrolase (128 aa).

Residue Asp86 coordinates Mg(2+). Zn(2+) is bound at residue Cys87. 2 residues coordinate Mg(2+): Asp88 and Asp90. Zn(2+)-binding residues include Cys103 and Cys110.

This sequence belongs to the PRA-CH family. Homodimer. The cofactor is Mg(2+). It depends on Zn(2+) as a cofactor.

It is found in the cytoplasm. It catalyses the reaction 1-(5-phospho-beta-D-ribosyl)-5'-AMP + H2O = 1-(5-phospho-beta-D-ribosyl)-5-[(5-phospho-beta-D-ribosylamino)methylideneamino]imidazole-4-carboxamide. The protein operates within amino-acid biosynthesis; L-histidine biosynthesis; L-histidine from 5-phospho-alpha-D-ribose 1-diphosphate: step 3/9. Catalyzes the hydrolysis of the adenine ring of phosphoribosyl-AMP. The chain is Phosphoribosyl-AMP cyclohydrolase from Roseobacter denitrificans (strain ATCC 33942 / OCh 114) (Erythrobacter sp. (strain OCh 114)).